The sequence spans 230 residues: Acyl-protein thioesterase 1 (230 aa).

Active-site charge relay system residues include Ser-119, Asp-174, and His-208. Lys-224 carries the N6-acetyllysine modification.

The protein belongs to the AB hydrolase superfamily. AB hydrolase 2 family. Homodimer. In terms of tissue distribution, platelets.

The protein localises to the cytoplasm. The protein resides in the cell membrane. It is found in the nucleus membrane. Its subcellular location is the endoplasmic reticulum. It catalyses the reaction S-hexadecanoyl-L-cysteinyl-[protein] + H2O = L-cysteinyl-[protein] + hexadecanoate + H(+). The catalysed reaction is 1-hexadecanoyl-sn-glycero-3-phosphocholine + H2O = sn-glycerol 3-phosphocholine + hexadecanoate + H(+). It carries out the reaction a 1-(9Z-octadecenoyl)-2-acyl-sn-glycero-3-phosphocholine + H2O = a 2-acyl-sn-glycero-3-phosphocholine + (9Z)-octadecenoate + H(+). Inhibited by palmostatin-B, leading to impair depalmitoylating of Ras. Its function is as follows. Acts as an acyl-protein thioesterase. Hydrolyzes fatty acids from S-acylated cysteine residues in proteins such as trimeric G alpha proteins or HRAS. Acts as a palmitoyl thioesterase that catalyzes depalmitoylation of proteins, such as ADRB2, KCNMA1 and SQSTM1. Acts as a negative regulator of autophagy by mediating palmitoylation of SQSTM1, decreasing affinity between SQSTM1 and ATG8 proteins and recruitment of ubiquitinated cargo proteins to autophagosomes. Acts as a lysophospholipase and hydrolyzes lysophosphatidylcholine (lyso-PC). Also hydrolyzes lysophosphatidylethanolamine (lyso-PE), lysophosphatidylinositol (lyso-PI) and lysophosphatidylserine (lyso-PS). Has much higher thioesterase activity than lysophospholipase activity. Contributes to the production of lysophosphatidic acid (LPA) during blood coagulation by recognizing and cleaving plasma phospholipids to generate lysophospholipids which in turn act as substrates for ENPP2 to produce LPA. This Homo sapiens (Human) protein is Acyl-protein thioesterase 1 (LYPLA1).